Here is a 361-residue protein sequence, read N- to C-terminus: Protein RecA (361 aa).

77-84 is a binding site for ATP; the sequence is GPESSGKT.

Belongs to the RecA family.

The protein resides in the cytoplasm. Functionally, can catalyze the hydrolysis of ATP in the presence of single-stranded DNA, the ATP-dependent uptake of single-stranded DNA by duplex DNA, and the ATP-dependent hybridization of homologous single-stranded DNAs. It interacts with LexA causing its activation and leading to its autocatalytic cleavage. The chain is Protein RecA from Brucella anthropi (strain ATCC 49188 / DSM 6882 / CCUG 24695 / JCM 21032 / LMG 3331 / NBRC 15819 / NCTC 12168 / Alc 37) (Ochrobactrum anthropi).